The chain runs to 885 residues: Leucine--tRNA ligase (885 aa).

The 'HIGH' region motif lies at Pro-48–His-58. A 'KMSKS' region motif is present at residues Thr-639–Ser-643. Lys-642 serves as a coordination point for ATP.

This sequence belongs to the class-I aminoacyl-tRNA synthetase family.

The protein localises to the cytoplasm. The catalysed reaction is tRNA(Leu) + L-leucine + ATP = L-leucyl-tRNA(Leu) + AMP + diphosphate. The polypeptide is Leucine--tRNA ligase (Bordetella bronchiseptica (strain ATCC BAA-588 / NCTC 13252 / RB50) (Alcaligenes bronchisepticus)).